Here is a 323-residue protein sequence, read N- to C-terminus: tRNA-modifying protein YgfZ (323 aa).

Folate-binding residues include Trp-29 and Trp-182.

Belongs to the tRNA-modifying YgfZ family.

It is found in the cytoplasm. Functionally, folate-binding protein involved in regulating the level of ATP-DnaA and in the modification of some tRNAs. It is probably a key factor in regulatory networks that act via tRNA modification, such as initiation of chromosomal replication. This is tRNA-modifying protein YgfZ from Vibrio atlanticus (strain LGP32) (Vibrio splendidus (strain Mel32)).